An 89-amino-acid polypeptide reads, in one-letter code: Putative regulatory protein MAE_11840 (89 aa).

The protein belongs to the RemA family.

In Microcystis aeruginosa (strain NIES-843 / IAM M-2473), this protein is Putative regulatory protein MAE_11840.